The following is a 338-amino-acid chain: Glycerol-3-phosphate dehydrogenase [NAD(P)+] (338 aa).

Residues Ser-13, Trp-14, and Lys-108 each contribute to the NADPH site. Residues Lys-108, Gly-139, and Ser-141 each coordinate sn-glycerol 3-phosphate. Ala-143 provides a ligand contact to NADPH. The sn-glycerol 3-phosphate site is built by Lys-194, Asp-247, Ser-257, Arg-258, and Asn-259. Lys-194 (proton acceptor) is an active-site residue. Residue Arg-258 coordinates NADPH. The NADPH site is built by Val-282 and Glu-284.

The protein belongs to the NAD-dependent glycerol-3-phosphate dehydrogenase family.

It localises to the cytoplasm. It catalyses the reaction sn-glycerol 3-phosphate + NAD(+) = dihydroxyacetone phosphate + NADH + H(+). The enzyme catalyses sn-glycerol 3-phosphate + NADP(+) = dihydroxyacetone phosphate + NADPH + H(+). The protein operates within membrane lipid metabolism; glycerophospholipid metabolism. Functionally, catalyzes the reduction of the glycolytic intermediate dihydroxyacetone phosphate (DHAP) to sn-glycerol 3-phosphate (G3P), the key precursor for phospholipid synthesis. In Streptococcus pyogenes serotype M28 (strain MGAS6180), this protein is Glycerol-3-phosphate dehydrogenase [NAD(P)+].